Consider the following 334-residue polypeptide: Sucrose operon repressor (334 aa).

One can recognise an HTH lacI-type domain in the interval 6-63 (VTIKDIAELAGVSKATASLVLNGRGKELRVAQETRERVLAIAREQHYQPSIHARSLRD). The segment at residues 8 to 27 (IKDIAELAGVSKATASLVLN) is a DNA-binding region (H-T-H motif).

In terms of biological role, repressor for the scr operon. Binds D-fructose as an inducer. The polypeptide is Sucrose operon repressor (scrR) (Klebsiella pneumoniae).